Here is a 156-residue protein sequence, read N- to C-terminus: Endoribonuclease YbeY (156 aa).

His122, His126, and His132 together coordinate Zn(2+).

It belongs to the endoribonuclease YbeY family. The cofactor is Zn(2+).

Its subcellular location is the cytoplasm. In terms of biological role, single strand-specific metallo-endoribonuclease involved in late-stage 70S ribosome quality control and in maturation of the 3' terminus of the 16S rRNA. The sequence is that of Endoribonuclease YbeY from Syntrophomonas wolfei subsp. wolfei (strain DSM 2245B / Goettingen).